The chain runs to 428 residues: Probable mannosyltransferase YUR1 (428 aa).

The Cytoplasmic segment spans residues 1-3 (MAK). Residues 4–24 (GGSLYIVGIFLPIWTFMIYIF) traverse the membrane as a helical; Signal-anchor for type II membrane protein segment. Positions 25–88 (GKELFLIRKY…TRQNDSDSFH (64 aa)) are stem region. Over 25-428 (GKELFLIRKY…YFLKEEQDEI (404 aa)) the chain is Lumenal. Asn77, Asn82, Asn92, and Asn167 each carry an N-linked (GlcNAc...) asparagine glycan. Residues 89–428 (LRENATILML…YFLKEEQDEI (340 aa)) form a catalytic region. The active-site Nucleophile is Glu313. Asn414 carries an N-linked (GlcNAc...) asparagine glycan.

The protein belongs to the glycosyltransferase 15 family.

Its subcellular location is the golgi apparatus membrane. Its pathway is protein modification; protein glycosylation. Functionally, possible glycosyltransferase involved in N-linked glycosylation. Transfers an alpha-D-mannosyl residue from GDP-mannose into lipid-linked oligosaccharide, forming an alpha-(1-&gt;2)-D-mannosyl-D-mannose linkage. This chain is Probable mannosyltransferase YUR1 (YUR1), found in Saccharomyces cerevisiae (strain ATCC 204508 / S288c) (Baker's yeast).